We begin with the raw amino-acid sequence, 417 residues long: Caveolae-associated protein 2 (417 aa).

Residues 1 to 42 (MGEDAAQAEKFQHPNTDMLQEKPSNPSPMPSSTPSPSLNLGS) are disordered. Gly2 is subject to N-acetylglycine. Residues 2–168 (GEDAAQAEKF…IFQEESEIPA (167 aa)) are interaction with CAVIN1. A phosphoserine mark is found at Ser27, Ser35, Ser37, and Ser51. 2 coiled-coil regions span residues 61–87 (LLDKLVNMLDAVRENQHNMEQRQINLE) and 126–267 (RAVR…VERR). The segment at 62–100 (LDKLVNMLDAVRENQHNMEQRQINLEGSVKGIQNDLTKL) is leucine-zipper. At Thr195 the chain carries Phosphothreonine. Disordered stretches follow at residues 198–242 (NVDL…DSLK) and 256–381 (KLGT…ALQQ). 3 positions are modified to phosphoserine: Ser202, Ser203, and Ser217. Residues 202–218 (SSDDELPGDEEALEDSA) show a composition bias toward acidic residues. The span at 219–242 (EEKMEESRAEKIKRSSLKKVDSLK) shows a compositional bias: basic and acidic residues. Over residues 274–286 (LTPNHQKASSGKS) the composition is skewed to polar residues. Ser282, Ser283, Ser286, Ser287, Ser292, and Ser295 each carry phosphoserine. Positions 302–320 (REGESSAENETKLEEQVQD) are enriched in basic and acidic residues. Residues Ser326, Ser335, Ser358, and Ser362 each carry the phosphoserine modification. The segment covering 354–365 (RGNNSGVGSNAD) has biased composition (polar residues). At Thr367 the chain carries Phosphothreonine. The span at 367–376 (TIEEDEEEES) shows a compositional bias: acidic residues. Phosphotyrosine is present on Tyr387. Phosphoserine is present on residues Ser389 and Ser395.

Belongs to the CAVIN family. In terms of assembly, component of the CAVIN complex composed of CAVIN1, CAVIN2, CAVIN3 and CAVIN. Interacts with CAVIN4; this augments the transactivation of NPPA by CAVIN4. Binds to PRKCA in the presence of phosphatidylserine. Interacts with CAVIN1 and CAV3. Post-translationally, the N-terminus is blocked. In terms of processing, phosphorylated on Ser residues.

Its subcellular location is the cytoplasm. It localises to the cytosol. The protein localises to the membrane. It is found in the caveola. Plays an important role in caveolar biogenesis and morphology. Regulates caveolae morphology by inducing membrane curvature within caveolae. Plays a role in caveola formation in a tissue-specific manner. Required for the formation of caveolae in the lung and fat endothelia but not in the heart endothelia. Negatively regulates the size or stability of CAVIN complexes in the lung endothelial cells. May play a role in targeting PRKCA to caveolae. The sequence is that of Caveolae-associated protein 2 from Rattus norvegicus (Rat).